A 373-amino-acid chain; its full sequence is Ras association domain-containing protein 7 (373 aa).

The region spanning 6–89 (AAMELKVWVD…VQFVLRRTGP (84 aa)) is the Ras-associating domain. The disordered stretch occupies residues 122–150 (CEPRKTLTPEPAPSLSRPGPAAPVTPTPG). Coiled coils occupy residues 175–227 (WEQE…AAEA) and 248–297 (QERQ…QFIQ). Residues 300-356 (GAALPPPPRPDRGPPGTQGPLPPAREESLLGAPSESHAGAQPRPRGGPHDAELLEVA) are disordered.

Interacts with MAP2K7 and GTP-bound NRAS. In terms of processing, polyubiquitinated and degraded by the proteasome upon prolonged stress stimuli.

The protein localises to the cytoplasm. It localises to the cytoskeleton. It is found in the microtubule organizing center. Its subcellular location is the centrosome. Its function is as follows. Negatively regulates stress-induced JNK activation and apoptosis by promoting MAP2K7 phosphorylation and inhibiting its ability to activate JNK. Following prolonged stress, anti-apoptotic effect stops because of degradation of RASSF7 protein via the ubiquitin-proteasome pathway. Required for the activation of AURKB and chromosomal congression during mitosis where it stimulates microtubule polymerization. This chain is Ras association domain-containing protein 7 (RASSF7), found in Homo sapiens (Human).